The primary structure comprises 396 residues: Fumarate--(S)-2,3-diaminopropanoate ligase (396 aa).

It carries out the reaction (S)-2,3-diaminopropanoate + fumarate + ATP = N(3)-fumaroyl-(S)-2,3-diaminopropanoate + AMP + diphosphate. It participates in antibiotic biosynthesis. Functionally, involved in dapdiamide antibiotics biosynthesis. Ligates fumarate and 2,3-diaminopropionate (DAP) to form N-beta-fumaroyl-DAP. Can also form N-succinoyl-DAP from succinate and DAP, with lower efficiency. This chain is Fumarate--(S)-2,3-diaminopropanoate ligase, found in Enterobacter agglomerans (Erwinia herbicola).